Here is a 594-residue protein sequence, read N- to C-terminus: Lipolysis-stimulated lipoprotein receptor (594 aa).

The N-terminal stretch at 1–35 (MAPAASACAGAPGSHPATTIFVCLFLIIYCPDRAS) is a signal peptide. The Extracellular portion of the chain corresponds to 36–206 (AIQVTVPDPY…PGFRAGPLED (171 aa)). Positions 89-181 (PASVDNQLNA…DLDGNNEAYA (93 aa)) constitute an Ig-like V-type domain. Cysteines 113 and 165 form a disulfide. A helical transmembrane segment spans residues 207–227 (WLFVVVVCLASLLFFLLLGIC). Topologically, residues 228–594 (WCQCCPHTCC…LALSRESLVV (367 aa)) are cytoplasmic. Residue Thr283 is modified to Phosphothreonine. Ser308 bears the Phosphoserine; by MAPK8 and MAPK9 mark. Phosphoserine is present on residues Ser314, Ser332, Ser375, and Ser379. Over residues 375–387 (SEVTSLHEDDWRS) the composition is skewed to basic and acidic residues. Residues 375 to 594 (SEVTSLHEDD…LALSRESLVV (220 aa)) are disordered. Thr396 carries the post-translational modification Phosphothreonine. Ser407, Ser410, and Ser436 each carry phosphoserine. The segment covering 435–444 (RSVDALDDIN) has biased composition (basic and acidic residues). Low complexity predominate over residues 445 to 460 (RPGSTESGRSSPPSSG). A phosphoserine mark is found at Ser471 and Ser473. Residues 472 to 550 (RSRDDLYDPD…GAGERRRVYR (79 aa)) show a composition bias toward basic and acidic residues. Tyr478 is subject to Phosphotyrosine. Ser576 carries the phosphoserine modification. Residue Lys583 forms a Glycyl lysine isopeptide (Lys-Gly) (interchain with G-Cter in ubiquitin) linkage. Phosphoserine occurs at positions 588 and 591.

Belongs to the immunoglobulin superfamily. LISCH7 family. Homotrimer or homotetramer. Assembles into cell-cell contacts. Interacts (via the cytoplasmic domain) with MARVELD2 (via C-terminal cytoplasmic domain); the interaction is required to recruit MARVELD2 to tricellular contacts. Interacts with OCLN. Post-translationally, phosphorylation at Ser-308 by MAPK8/JNK1 and MAPK9/JNK2 may be required for exclusive localization at tricellular tight junstions. Polyubiquitinated at Lys-583 via 'Lys-63'-linked ubiquitin chains; deubiquitinated by USP53. In terms of tissue distribution, expressed in epithelial tissues (at protein level). Specifically expressed in liver and to a lower extent in kidney (at protein level). Also detected in brain, testis, ovaries, adrenal gland, intestine, muscle, and lung. In colon, only expressed in the lower portion of crypts. Expressed in the liver. As to expression, expressed in liver, stomach, small intestine and colon. Also detected in other epithelial tissues.

Its subcellular location is the cell membrane. The protein resides in the cell junction. It is found in the tight junction. Probable role in the clearance of triglyceride-rich lipoprotein from blood. Binds chylomicrons, LDL and VLDL in presence of free fatty acids and allows their subsequent uptake in the cells. Maintains epithelial barrier function by recruiting MARVELD2/tricellulin to tricellular tight junctions. This is Lipolysis-stimulated lipoprotein receptor from Mus musculus (Mouse).